The chain runs to 811 residues: Endothelin-converting enzyme 2 (811 aa).

The Cytoplasmic segment spans residues 1–106 (MNVALQELGA…QLLGSRTQLE (106 aa)). Residues 22–64 (LRDEDAPETPVEGGASPDAMEVGKGASPFSPGPSPGMTPGTPR) are disordered. The chain crosses the membrane as a helical; Signal-anchor for type II membrane protein span at residues 107–127 (LVLAGASLLLAALLLGCLVAL). Topologically, residues 128–811 (GVQYHRDPSH…MNPGQLCEVW (684 aa)) are lumenal. The Peptidase M13 domain maps to 139-811 (TCLTEACIRV…MNPGQLCEVW (673 aa)). Cystine bridges form between C140-C145, C163-C796, C171-C756, C227-C476, and C685-C808. N-linked (GlcNAc...) asparagine glycosylation is found at N207, N211, N252, N312, N357, N424, and N580. Zn(2+) is bound at residue H648. Residue E649 is part of the active site. H652 is a binding site for Zn(2+). N-linked (GlcNAc...) asparagine glycans are attached at residues N673 and N681. E708 lines the Zn(2+) pocket. D712 serves as the catalytic Proton donor.

This sequence belongs to the peptidase M13 family. Requires Zn(2+) as cofactor.

It is found in the golgi apparatus membrane. The protein resides in the cytoplasmic vesicle. The protein localises to the secretory vesicle membrane. It carries out the reaction Hydrolysis of the 21-Trp-|-Val-22 bond in big endothelin to form endothelin 1.. In terms of biological role, converts big endothelin-1 to endothelin-1. Also involved in the processing of various neuroendocrine peptides, including neurotensin, angiotensin I, substance P, proenkephalin-derived peptides, and prodynorphin-derived peptides. May play a role in amyloid-beta processing. This chain is Endothelin-converting enzyme 2, found in Homo sapiens (Human).